The primary structure comprises 345 residues: Dihydroorotase (345 aa).

Zn(2+) contacts are provided by His-13 and His-15. Residues 15 to 17 and Asn-41 contribute to the substrate site; that span reads HFR. Zn(2+) is bound by residues Lys-98, His-135, and His-173. Lys-98 bears the N6-carboxylysine mark. A substrate-binding site is contributed by His-135. Residue Leu-218 coordinates substrate. Residue Asp-246 coordinates Zn(2+). Asp-246 is an active-site residue. The substrate site is built by His-250 and Ala-262.

It belongs to the metallo-dependent hydrolases superfamily. DHOase family. Class II DHOase subfamily. In terms of assembly, homodimer. The cofactor is Zn(2+).

It catalyses the reaction (S)-dihydroorotate + H2O = N-carbamoyl-L-aspartate + H(+). It participates in pyrimidine metabolism; UMP biosynthesis via de novo pathway; (S)-dihydroorotate from bicarbonate: step 3/3. Catalyzes the reversible cyclization of carbamoyl aspartate to dihydroorotate. This is Dihydroorotase from Shewanella pealeana (strain ATCC 700345 / ANG-SQ1).